A 151-amino-acid chain; its full sequence is MKKIDVKILDPRVGKEFPLPTYATSGSAGLDLRACLDDAVELAPGDTTLVPTGLAIHIADPSLAAMMLPRSGLGHKHGIVLGNLVGLIDSDYQGQLMISVWNRGQDSFTIQPGERIAQMIFVPVVQAEFNLVEDFDATDRGEGGFGHSGRQ.

Substrate is bound by residues 70–72 (RSG), N83, 87–89 (LID), and M97.

Belongs to the dUTPase family. In terms of assembly, homotrimer. Mg(2+) serves as cofactor.

It carries out the reaction dUTP + H2O = dUMP + diphosphate + H(+). It participates in pyrimidine metabolism; dUMP biosynthesis; dUMP from dCTP (dUTP route): step 2/2. In terms of biological role, this enzyme is involved in nucleotide metabolism: it produces dUMP, the immediate precursor of thymidine nucleotides and it decreases the intracellular concentration of dUTP so that uracil cannot be incorporated into DNA. This is Deoxyuridine 5'-triphosphate nucleotidohydrolase from Escherichia fergusonii (strain ATCC 35469 / DSM 13698 / CCUG 18766 / IAM 14443 / JCM 21226 / LMG 7866 / NBRC 102419 / NCTC 12128 / CDC 0568-73).